The chain runs to 317 residues: Putative HTH-type transcriptional regulatory protein NP_1320A (317 aa).

Positions 132–189 constitute an HTH cro/C1-type domain; that stretch reads LSDIRSQEDMSLGKLANELGVSRRTVSKYEDGMSASVEVAAELEEIFDRKLASPVEVL. The segment at residues 143–162 is a DNA-binding region (H-T-H motif); it reads LGKLANELGVSRRTVSKYED.

The polypeptide is Putative HTH-type transcriptional regulatory protein NP_1320A (Natronomonas pharaonis (strain ATCC 35678 / DSM 2160 / CIP 103997 / JCM 8858 / NBRC 14720 / NCIMB 2260 / Gabara) (Halobacterium pharaonis)).